We begin with the raw amino-acid sequence, 648 residues long: Threonine--tRNA ligase (648 aa).

Residues 1 to 63 (MTEINIEFPD…NENVKIEIVT (63 aa)) form the TGS domain. Residues 243–541 (DHRVIGNNLD…LIEMYKGAFP (299 aa)) are catalytic. 3 residues coordinate Zn(2+): C337, H388, and H518.

It belongs to the class-II aminoacyl-tRNA synthetase family. As to quaternary structure, homodimer. The cofactor is Zn(2+).

The protein localises to the cytoplasm. It catalyses the reaction tRNA(Thr) + L-threonine + ATP = L-threonyl-tRNA(Thr) + AMP + diphosphate + H(+). Functionally, catalyzes the attachment of threonine to tRNA(Thr) in a two-step reaction: L-threonine is first activated by ATP to form Thr-AMP and then transferred to the acceptor end of tRNA(Thr). Also edits incorrectly charged L-seryl-tRNA(Thr). The polypeptide is Threonine--tRNA ligase (Pediococcus pentosaceus (strain ATCC 25745 / CCUG 21536 / LMG 10740 / 183-1w)).